We begin with the raw amino-acid sequence, 470 residues long: MAGENHQWQGSILYNMLMSAKQTRAAPEAPETRLVDQCWGCSCGDEPGVGREGLLGGRNVSLLYRCCFCGKDHPRQGSILYSMLTNAKQTYAAPKAPEATLGPCWGCSCGSDPGVGRTGLPGGRPVALLYRCCFCGEDHPRQGSILYSLLTSAKQTHVAPAAPEARPGGAWWDRSYFAQRPGGREALPGGRAMGLLYRCCFCGEDHPQQGSTLYCMPTSTNQAQAAPEERPRAPWWDTSSGALRPVALKNPQVVCEAASAGLLKTLRFVKYLPCFQVLPLDQQLVLVRNCWASLLMLELAQDRLQFETVEVSEPSMLQKILTTRRRETGGDEPLPVPTLQHHLAPPAEARKVPSASQVQAIKCFLSKCWSLNISTKEYAYLKGTVLFNPDVPGLQCVKYIQGLQWGTQQILSEHTRMTHQGPHDRFIELNSTLFLLRFINANVIAELFFRPIIGTVSMDDMMLEMLCTKL.

3 consecutive repeat copies span residues 1–67, 68–133, and 134–200. Positions 1-253 are 4 X 67 AA tandem repeats; that stretch reads MAGENHQWQG…RPVALKNPQV (253 aa). 3 short sequence motifs (LXXLL motif) span residues 13-17, 80-84, and 146-150; these read LYNML, LYSML, and LYSLL. One copy of the 4; truncated repeat lies at 201–253; sequence FCGEDHPQQGSTLYCMPTSTNQAQAAPEERPRAPWWDTSSGALRPVALKNPQV. The NR LBD domain occupies 205–469; that stretch reads DHPQQGSTLY…DMMLEMLCTK (265 aa). An AF-2 motif motif is present at residues 461 to 466; the sequence is MMLEML.

It belongs to the nuclear hormone receptor family. NR0 subfamily. In terms of assembly, homodimer. Interacts with NR5A1, NR5A2, NR0B2 and with COPS2. Interacts with ESRRB; represses ESRRB activity at the GATA6 promoter.

It localises to the nucleus. Its subcellular location is the cytoplasm. In terms of biological role, nuclear receptor that lacks a DNA-binding domain and acts as a corepressor that inhibits the transcriptional activity of other nuclear receptors through heterodimeric interactions. Component of a cascade required for the development of the hypothalamic-pituitary-adrenal-gonadal axis. May also have a role in the development of the embryo and in the maintenance of embryonic stem cell pluripotency. This chain is Nuclear receptor subfamily 0 group B member 1 (NR0B1), found in Macaca mulatta (Rhesus macaque).